Here is a 1627-residue protein sequence, read N- to C-terminus: Surface protein G (1627 aa).

The first 50 residues, 1-50, serve as a signal peptide directing secretion; it reads MRDKKGPVNKRVDFLSNKLNKYSIRKFTVGTASILIGSLMYLGTQQEAEA. Residues 22–33 carry the YSIRK-G/S signaling motif motif; sequence YSIRKFTVGTAS. The tract at residues 51–418 is ligand binding A region, squamous nasal epithelial cell binding; sequence AENNIENPTT…KGSEFTFTPE (368 aa). 3 disordered regions span residues 74–143, 440–467, and 496–1601; these read EVTN…VRKA, KFNP…TTPT, and EYGP…TGLE. Basic and acidic residues-rich tracts occupy residues 96–120, 451–461, 505–523, 554–570, 579–589, 606–619, 633–651, 682–698, 707–717, 736–747, 761–779, 810–826, 835–845, 862–875, 889–907, 938–954, 963–973, 990–1003, 1017–1035, 1066–1082, 1091–1101, 1118–1131, 1145–1163, 1194–1210, 1219–1229, 1246–1259, 1273–1291, 1322–1338, 1347–1357, 1374–1387, 1431–1442, and 1459–1478; these read DTIE…KEVA, KVTREGQKGEK, GHRD…EEVP, SIVE…RKFN, SKGE…KDPI, GEPKEEITKDPI, SKGE…KDPV, KVIEEPVDDVIK, and FETK…RVKQ. The region spanning 419–501 is the G5 1 domain; that stretch reads APKTITELEK…NELTEYGPET (83 aa). A G5 2 domain is found at 547–629; sequence YGPVKGDSIV…NELTEYGPET (83 aa). A G5 3 domain is found at 675-757; sequence YGPVKGDSIV…NELTEYGPET (83 aa). Positions 803–885 constitute a G5 4 domain; sequence YGPVKGDSIV…NELTEYGPET (83 aa). The G5 5 domain occupies 931–1013; the sequence is YGPVKGDSIV…NELTEYGPET (83 aa). One can recognise a G5 6 domain in the interval 1059–1141; it reads YGPVKGDSIV…NELTEYGPET (83 aa). Positions 1187–1269 constitute a G5 7 domain; it reads YGPVKGDSIV…NELTEYGPET (83 aa). The G5 8 domain maps to 1315 to 1397; it reads YGPVKGDSIV…NELTEFGGEK (83 aa). Residues 1443-1525 enclose the G5 9 domain; it reads HGPKTGTPET…DKIVEFGGEK (83 aa). Residues 1481-1495 are compositionally biased toward polar residues; that stretch reads QPGSKTITTPITVNP. Residues 1509–1539 are compositionally biased toward basic and acidic residues; the sequence is EITKQPVDKIVEFGGEKPKDPKGPENPEKPS. The LPXTG sorting signal signature appears at 1595–1599; that stretch reads LPKTG. The residue at position 1598 (threonine 1598) is a Pentaglycyl murein peptidoglycan amidated threonine. A propeptide spans 1599–1627 (removed by sortase); sequence GLESTQKGLIFSSIIGIAGLMLLARRRKN.

It is found in the secreted. The protein localises to the cell wall. Promotes adhesion of bacterial cells to human squamous nasal epithelial cells, a phenomenon which is likely to be important in nasal colonization. Forms short, extremely dense and thin fibrils all over the bacterial surface. Does not bind to either buccal cells or non-differentiated keratinocytes. Promotes cellular aggregation leading to biofilm formation. In Staphylococcus aureus (strain NCTC 8325 / PS 47), this protein is Surface protein G (sasG).